The primary structure comprises 409 residues: 4-hydroxy-3-methylbut-2-en-1-yl diphosphate synthase (flavodoxin) (409 aa).

C298, C301, C344, and E351 together coordinate [4Fe-4S] cluster.

It belongs to the IspG family. [4Fe-4S] cluster serves as cofactor.

It catalyses the reaction (2E)-4-hydroxy-3-methylbut-2-enyl diphosphate + oxidized [flavodoxin] + H2O + 2 H(+) = 2-C-methyl-D-erythritol 2,4-cyclic diphosphate + reduced [flavodoxin]. The protein operates within isoprenoid biosynthesis; isopentenyl diphosphate biosynthesis via DXP pathway; isopentenyl diphosphate from 1-deoxy-D-xylulose 5-phosphate: step 5/6. Its function is as follows. Converts 2C-methyl-D-erythritol 2,4-cyclodiphosphate (ME-2,4cPP) into 1-hydroxy-2-methyl-2-(E)-butenyl 4-diphosphate. This chain is 4-hydroxy-3-methylbut-2-en-1-yl diphosphate synthase (flavodoxin), found in Dechloromonas aromatica (strain RCB).